The chain runs to 432 residues: Adenylosuccinate synthetase (432 aa).

Residues 13–19 (GDEGKGK) and 41–43 (GHT) contribute to the GTP site. The Proton acceptor role is filled by aspartate 14. The Mg(2+) site is built by aspartate 14 and glycine 41. IMP contacts are provided by residues 14–17 (DEGK), 39–42 (NAGH), threonine 131, arginine 145, glutamine 226, threonine 241, and arginine 305. Histidine 42 serves as the catalytic Proton donor. Residue 301–307 (SVTGRAR) participates in substrate binding. GTP contacts are provided by residues arginine 307, 333 to 335 (KLD), and 416 to 418 (STG).

The protein belongs to the adenylosuccinate synthetase family. As to quaternary structure, homodimer. The cofactor is Mg(2+).

The protein localises to the cytoplasm. The enzyme catalyses IMP + L-aspartate + GTP = N(6)-(1,2-dicarboxyethyl)-AMP + GDP + phosphate + 2 H(+). It functions in the pathway purine metabolism; AMP biosynthesis via de novo pathway; AMP from IMP: step 1/2. In terms of biological role, plays an important role in the de novo pathway of purine nucleotide biosynthesis. Catalyzes the first committed step in the biosynthesis of AMP from IMP. This is Adenylosuccinate synthetase from Neisseria meningitidis serogroup A / serotype 4A (strain DSM 15465 / Z2491).